The primary structure comprises 142 residues: Galactose-6-phosphate isomerase subunit LacA (142 aa).

It belongs to the LacAB/RpiB family. Heteromultimeric protein consisting of LacA and LacB.

It carries out the reaction aldehydo-D-galactose 6-phosphate = keto-D-tagatose 6-phosphate. It participates in carbohydrate metabolism; D-galactose 6-phosphate degradation; D-tagatose 6-phosphate from D-galactose 6-phosphate: step 1/1. The polypeptide is Galactose-6-phosphate isomerase subunit LacA (Enterococcus faecalis (strain ATCC 700802 / V583)).